Reading from the N-terminus, the 152-residue chain is Small ribosomal subunit protein bS6 (152 aa).

Residues 96 to 152 are disordered; it reads HEEGPSAMLQKRDRDDRGERGDRGDRGDRGDRGFGGREDRPRRPRPTEESHGGEEEV.

This sequence belongs to the bacterial ribosomal protein bS6 family.

Its function is as follows. Binds together with bS18 to 16S ribosomal RNA. This chain is Small ribosomal subunit protein bS6, found in Xanthobacter autotrophicus (strain ATCC BAA-1158 / Py2).